The chain runs to 77 residues: DNA-directed RNA polymerase subunit epsilon (77 aa).

The protein belongs to the RNA polymerase subunit epsilon family. RNAP is composed of a core of 2 alpha, a beta and a beta' subunit. The core is associated with a delta subunit, and at least one of epsilon or omega. When a sigma factor is associated with the core the holoenzyme is formed, which can initiate transcription.

It carries out the reaction RNA(n) + a ribonucleoside 5'-triphosphate = RNA(n+1) + diphosphate. Functionally, a non-essential component of RNA polymerase (RNAP). The protein is DNA-directed RNA polymerase subunit epsilon of Streptococcus pneumoniae serotype 2 (strain D39 / NCTC 7466).